Consider the following 90-residue polypeptide: Small ribosomal subunit protein uS15c (90 aa).

The protein belongs to the universal ribosomal protein uS15 family. In terms of assembly, part of the 30S ribosomal subunit.

The protein localises to the plastid. It localises to the chloroplast. This Mesostigma viride (Green alga) protein is Small ribosomal subunit protein uS15c (rps15).